The following is a 356-amino-acid chain: Sorbitol dehydrogenase (356 aa).

Cys44 serves as a coordination point for Zn(2+). A substrate-binding site is contributed by Tyr50. Positions 69 and 70 each coordinate Zn(2+). Glu155 is a binding site for substrate. NAD(+)-binding residues include Ile183, Asp203, and Arg208. Phosphoserine is present on residues Ser210 and Ser224. Residues Val272 to Leu274 and Val296 to Arg298 each bind NAD(+). Substrate contacts are provided by Arg298 and Tyr299.

It belongs to the zinc-containing alcohol dehydrogenase family. In terms of assembly, homotetramer. It depends on Zn(2+) as a cofactor. In terms of tissue distribution, expressed in lens.

The protein localises to the mitochondrion membrane. The protein resides in the cell projection. It is found in the cilium. Its subcellular location is the flagellum. It catalyses the reaction xylitol + NAD(+) = D-xylulose + NADH + H(+). It carries out the reaction keto-D-fructose + NADH + H(+) = D-sorbitol + NAD(+). The enzyme catalyses L-iditol + NAD(+) = keto-L-sorbose + NADH + H(+). Its activity is regulated as follows. Inhibited in vitro by metal chelators such as EDTA and 1,10-phenanthroline. Functionally, polyol dehydrogenase that catalyzes the reversible NAD(+)-dependent oxidation of various sugar alcohols. Is mostly active with xylitol, D-sorbitol (D-glucitol) and L-iditol as substrates, leading to the C2-oxidized products D-xylulose, D-fructose and L-sorbose, respectively. Is a key enzyme in the polyol pathway that interconverts glucose and fructose via sorbitol, which constitutes an important alternate route for glucose metabolism. May play a role in sperm motility by using sorbitol as an alternative energy source for sperm motility. Cannot use NADP(+) as the electron acceptor. Has no activity on ethanol, methanol, glycerol, galactitol and fructose 6-phosphate. This is Sorbitol dehydrogenase (SORD) from Bos taurus (Bovine).